Consider the following 459-residue polypeptide: UNC93-like protein 1 (459 aa).

The tract at residues 1-26 is disordered; the sequence is MNVRDEGKTTAEKHGGGEENKSPENK. A run of 11 helical transmembrane segments spans residues 38–58, 73–93, 96–116, 122–142, 159–179, 195–215, 251–271, 287–307, 314–334, 355–375, and 425–445; these read LMGF…GMGG, AVYT…NVLG, LTLA…LYYN, AFAI…WAGE, IALF…IPFI, YIAF…ILPA, LLIV…FNNV, FYWG…DFSF, GFTG…GGLA, GIEF…DAMY, and LIVN…LVYF.

It belongs to the unc-93 family.

It localises to the membrane. The chain is UNC93-like protein 1 from Arabidopsis thaliana (Mouse-ear cress).